The primary structure comprises 783 residues: Na(+)/H(+) exchanger protein 7 (783 aa).

Residues 1–18 traverse the membrane as a helical segment; the sequence is MWIKLLFFFTTLLVSTSG. Over 19 to 108 the chain is Extracellular; that stretch reads LGDDGITALL…WHWDYVKNEL (90 aa). The chain crosses the membrane as a helical span at residues 109–129; the sequence is VLTLFFIVIGLFKLVYHHTFV. At 130–132 the chain is on the cytoplasmic side; it reads TRK. The chain crosses the membrane as a helical span at residues 133–153; it reads ILPESCCLIFIGIAIGFFFVG. Residues 154 to 159 lie on the Extracellular side of the membrane; it reads DATHAS. Residues 160–180 form a helical membrane-spanning segment; that stretch reads IKFLEFKSKVFFFYLLPPIIL. At 181–206 the chain is on the cytoplasmic side; that stretch reads ESAYSLKDRAFIENIGTILLYAVVGT. The chain crosses the membrane as a helical span at residues 207-227; the sequence is ILNIVLLAAALLILIWVGIMG. The Extracellular segment spans residues 228-235; it reads KYNLSVMD. The chain crosses the membrane as a helical span at residues 236–256; the sequence is ILTFASLVAAVDPVAVLAVFQ. The Cytoplasmic segment spans residues 257–262; it reads EVGVNK. A helical membrane pass occupies residues 263–283; the sequence is MLYFMVFGESLFNDAVTIVCY. Residues 284 to 299 lie on the Extracellular side of the membrane; it reads NLAIEFQTLPDFTWYH. The chain crosses the membrane as a helical span at residues 300–320; it reads GFLGLLSFLCVSIGGLIIGLI. At 321–350 the chain is on the cytoplasmic side; the sequence is CGAISSFVTKFTTDVRVVEPVVLFGMAYLA. Residues 351–371 form a helical membrane-spanning segment; the sequence is YLGSEMFHFSGIIALIACGLF. Topologically, residues 372–390 are extracellular; the sequence is QTHYACCNISYKSFTSVMY. N379 carries an N-linked (GlcNAc...) asparagine glycan. The segment at residues 391 to 411 is an intramembrane region (helical); that stretch reads ITKVCSTLCESLIFIILGVML. Topologically, residues 412–424 are extracellular; that stretch reads VNEREWFWTDWHP. A helical transmembrane segment spans residues 425-445; the sequence is VFSAVSVVLCVVVRFGVTFFL. The Cytoplasmic portion of the chain corresponds to 446 to 464; it reads TYFVNQFTGGVRHISFQEQ. A helical membrane pass occupies residues 465-485; that stretch reads FIMSYGGLRGAVSFSLVFMIS. At 486–492 the chain is on the extracellular side; sequence ANPDVKN. The helical transmembrane segment at 493–513 threads the bilayer; that stretch reads TMLGATYAVILFTNIIQGSTI. At 514-783 the chain is on the cytoplasmic side; it reads KLFVKWLNIR…TITESEETSF (270 aa). Residues 649 to 702 adopt a coiled-coil conformation; it reads DNEDADQRANELIKDVSSIRQLMHNPFEDCYLDRNLTHEEEKEQARLKMKKTRA. Positions 745–783 are disordered; that stretch reads RPSTSTRVSVEDEEQGLTMKEMEEEHPLMTITESEETSF.

The protein belongs to the monovalent cation:proton antiporter 1 (CPA1) transporter (TC 2.A.36) family. Interacts (via C-terminus) with cmd-1. In terms of tissue distribution, detected in the posterior cells of the intestine.

The protein resides in the basolateral cell membrane. Na+/H+ exchanger which mediates the transient acidification of the coelomic space and plays a role in contraction of posterior body muscles during defecation. Probably by regulating the defecation motor program, required for fatty acid uptake by intestinal cells. This is Na(+)/H(+) exchanger protein 7 from Caenorhabditis elegans.